We begin with the raw amino-acid sequence, 189 residues long: Holliday junction branch migration complex subunit RuvA (189 aa).

The tract at residues 1–63 (MIHALNGKVE…DDGISLYGFL (63 aa)) is domain I. Positions 64–135 (EVIKLKLFEK…ELKDTIKELD (72 aa)) are domain II. A flexible linker region spans residues 135–139 (DVSIN). The interval 140–189 (EKDRKVLEAIEALVTLGFNRNQAKKAVNKVAAKDDKLDDIIKKALRFLSR) is domain III.

It belongs to the RuvA family. In terms of assembly, homotetramer. Forms an RuvA(8)-RuvB(12)-Holliday junction (HJ) complex. HJ DNA is sandwiched between 2 RuvA tetramers; dsDNA enters through RuvA and exits via RuvB. An RuvB hexamer assembles on each DNA strand where it exits the tetramer. Each RuvB hexamer is contacted by two RuvA subunits (via domain III) on 2 adjacent RuvB subunits; this complex drives branch migration. In the full resolvosome a probable DNA-RuvA(4)-RuvB(12)-RuvC(2) complex forms which resolves the HJ.

Its subcellular location is the cytoplasm. Its function is as follows. The RuvA-RuvB-RuvC complex processes Holliday junction (HJ) DNA during genetic recombination and DNA repair, while the RuvA-RuvB complex plays an important role in the rescue of blocked DNA replication forks via replication fork reversal (RFR). RuvA specifically binds to HJ cruciform DNA, conferring on it an open structure. The RuvB hexamer acts as an ATP-dependent pump, pulling dsDNA into and through the RuvAB complex. HJ branch migration allows RuvC to scan DNA until it finds its consensus sequence, where it cleaves and resolves the cruciform DNA. The polypeptide is Holliday junction branch migration complex subunit RuvA (Thermosipho africanus (strain TCF52B)).